Reading from the N-terminus, the 284-residue chain is 4-diphosphocytidyl-2-C-methyl-D-erythritol kinase (284 aa).

Lysine 22 is an active-site residue. 104-114 serves as a coordination point for ATP; sequence PVGAGLGGASS. Residue aspartate 146 is part of the active site.

The protein belongs to the GHMP kinase family. IspE subfamily.

It carries out the reaction 4-CDP-2-C-methyl-D-erythritol + ATP = 4-CDP-2-C-methyl-D-erythritol 2-phosphate + ADP + H(+). Its pathway is isoprenoid biosynthesis; isopentenyl diphosphate biosynthesis via DXP pathway; isopentenyl diphosphate from 1-deoxy-D-xylulose 5-phosphate: step 3/6. In terms of biological role, catalyzes the phosphorylation of the position 2 hydroxy group of 4-diphosphocytidyl-2C-methyl-D-erythritol. In Hydrogenobaculum sp. (strain Y04AAS1), this protein is 4-diphosphocytidyl-2-C-methyl-D-erythritol kinase.